The following is a 319-amino-acid chain: Ornithine carbamoyltransferase (319 aa).

Carbamoyl phosphate is bound by residues 55–58 (STRT), glutamine 82, arginine 106, and 133–136 (HPCQ). Residues asparagine 171, aspartate 234, and 238-239 (SM) each bind L-ornithine. Residues 274 to 275 (CL) and arginine 302 each bind carbamoyl phosphate.

Belongs to the aspartate/ornithine carbamoyltransferase superfamily. OTCase family.

It localises to the cytoplasm. The enzyme catalyses carbamoyl phosphate + L-ornithine = L-citrulline + phosphate + H(+). It participates in amino-acid biosynthesis; L-arginine biosynthesis; L-arginine from L-ornithine and carbamoyl phosphate: step 1/3. Functionally, reversibly catalyzes the transfer of the carbamoyl group from carbamoyl phosphate (CP) to the N(epsilon) atom of ornithine (ORN) to produce L-citrulline. The protein is Ornithine carbamoyltransferase of Corynebacterium diphtheriae (strain ATCC 700971 / NCTC 13129 / Biotype gravis).